Reading from the N-terminus, the 166-residue chain is Cofilin-2 (166 aa).

Position 2 is an N-acetylalanine (Ala-2). Ser-3 is modified (phosphoserine). The ADF-H domain maps to 4-153; it reads GVTVNDEVIK…KDRSTLGEKL (150 aa). At Thr-6 the chain carries Phosphothreonine. Positions 30–34 match the Nuclear localization signal motif; that stretch reads KKRKK.

The protein belongs to the actin-binding proteins ADF family. Post-translationally, the phosphorylation of Ser-24 may prevent recognition of the nuclear localization signal.

The protein localises to the nucleus matrix. It is found in the cytoplasm. It localises to the cytoskeleton. Functionally, controls reversibly actin polymerization and depolymerization in a pH-sensitive manner. It has the ability to bind G- and F-actin in a 1:1 ratio of cofilin to actin. It is the major component of intranuclear and cytoplasmic actin rods. The polypeptide is Cofilin-2 (CFL2) (Bos taurus (Bovine)).